The primary structure comprises 167 residues: uncharacterized protein (167 aa).

To A.thaliana At2g20940.

This is an uncharacterized protein from Schizosaccharomyces pombe (strain 972 / ATCC 24843) (Fission yeast).